The sequence spans 329 residues: Putative glycosyltransferase CsbB (329 aa).

Helical transmembrane passes span 231–251 (CFYT…ATFV) and 264–284 (FTII…LGII).

The protein belongs to the glycosyltransferase 2 family. GtrB subfamily.

It localises to the cell membrane. The chain is Putative glycosyltransferase CsbB (csbB) from Bacillus subtilis (strain 168).